The following is a 1025-amino-acid chain: Complement receptor type 2 (1025 aa).

The N-terminal stretch at 1–11 (MLTWFLFYFSE) is a signal peptide. In terms of domain architecture, Sushi 1 spans 12-75 (ISCDPPPEVK…WDKAPPICES (64 aa)). Topologically, residues 12–963 (ISCDPPPEVK…PLALCKYRRW (952 aa)) are extracellular. 2 disulfides stabilise this stretch: Cys-14-Cys-56 and Cys-42-Cys-73. N-linked (GlcNAc...) asparagine glycans are attached at residues Asn-77 and Asn-113. Sushi domains follow at residues 80–140 (ISCS…VCES), 144–204 (LECP…TCKE), 205–265 (AQCE…VCKE), 266–336 (ILCP…YCVL), 341–400 (VLCL…VCEK), 401–460 (GCQA…QCTV), 461–516 (AECK…LCKE), 517–587 (ITCP…LCKL), 592–651 (VQCT…LCKK), 652–706 (EGCE…VCTV), 707–771 (ILCQ…QCLQ), 776–835 (THCP…TCIR), 839–899 (LGCQ…FCKE), and 900–960 (VNCS…LCKY). Cystine bridges form between Cys-82–Cys-124, Cys-110–Cys-138, Cys-146–Cys-189, Cys-175–Cys-202, Cys-207–Cys-248, Cys-234–Cys-263, Cys-268–Cys-317, Cys-297–Cys-334, Cys-343–Cys-385, Cys-371–Cys-398, Cys-402–Cys-445, Cys-431–Cys-458, Cys-463–Cys-501, Cys-487–Cys-514, Cys-519–Cys-568, Cys-548–Cys-585, Cys-594–Cys-636, Cys-622–Cys-649, Cys-654–Cys-689, Cys-675–Cys-704, Cys-709–Cys-752, Cys-738–Cys-769, Cys-778–Cys-820, Cys-806–Cys-833, Cys-841–Cys-884, and Cys-870–Cys-897. N-linked (GlcNAc...) asparagine glycans are attached at residues Asn-276, Asn-316, Asn-364, and Asn-380. A glycan (N-linked (GlcNAc...) asparagine) is linked at Asn-484. The N-linked (GlcNAc...) asparagine glycan is linked to Asn-527. 2 N-linked (GlcNAc...) asparagine glycosylation sites follow: Asn-615 and Asn-639. Asn-694 carries N-linked (GlcNAc...) asparagine glycosylation. N-linked (GlcNAc...) asparagine glycans are attached at residues Asn-754, Asn-790, Asn-813, Asn-823, and Asn-851. Asn-901 carries N-linked (GlcNAc...) asparagine glycosylation. Disulfide bonds link Cys-902-Cys-945 and Cys-931-Cys-958. A helical transmembrane segment spans residues 964–990 (STIPLICGISVGSALIILMSVGFCMIL). Topologically, residues 991 to 1025 (KHRESNYYTKTRPKEGALHLETREVYSIDPYNPAS) are cytoplasmic.

This sequence belongs to the receptors of complement activation (RCA) family. As to quaternary structure, interacts (via Sushi domain 1 and 2) with C3. Interacts with CD19. Part of a complex composed of CD19, CR2/CD21, CD81 and IFITM1/CD225 in the membrane of mature B-cells. Interacts (via Sushi domain 1 and 2) with FCER2 (via the C-terminus). Interacts with CD23. Interacts with FCRL5. Interacts with CR1. Interacts with INFNA1. As to expression, B-lymphocytes.

Its subcellular location is the cell membrane. Serves as a receptor for various ligands including complement component CD3d, HNRNPU OR IFNA1. When C3d is bound to antigens, attaches to C3d on B-cell surface and thereby facilitates the recognition and uptake of antigens by B-cells. This interaction enhances B-cell activation and subsequent immune responses. Forms a complex with several partners on the surface of B-cells including CD19, FCRL5 and CD81, to form the B-cell coreceptor complex that plays a crucial role in B-cell activation and signaling. Also induces specific intracellular signaling separately from the BCR and CD19 by activating the tyrosine kinase SRC, which then phosphorylates nucleolin/NCL and triggers AKT and GSK3 kinase activities in a SYK/CD19-independent manner. Acts as a ligand for CD23 (FcepsilonRII), a low-affinity receptor for IgE, which is expressed on B-cells and other immune cells, and thus participates in the regulation of IgE production. In Mus musculus (Mouse), this protein is Complement receptor type 2 (Cr2).